Consider the following 560-residue polypeptide: Cilia- and flagella-associated protein 184 (560 aa).

Residues 1–12 (MEGGSEHTKDPG) are compositionally biased toward basic and acidic residues. Positions 1–209 (MEGGSEHTKD…QEEGKPLGGR (209 aa)) are disordered. Acidic residues-rich tracts occupy residues 41 to 61 (GELE…EEEA) and 101 to 110 (EPEEPAEAGA). Composition is skewed to basic and acidic residues over residues 127–144 (AEAR…KEVR) and 179–209 (ETRR…LGGR). Coiled coils occupy residues 357-481 (QAAL…QGRD) and 510-536 (DSLL…LKRH).

This sequence belongs to the CFAP184 family. Forms a complex with CFAP263; the interaction is required for functional activity in cilia.

The protein localises to the cell projection. Its subcellular location is the cilium. It is found in the cytoplasm. The protein resides in the cytoskeleton. It localises to the microtubule organizing center. The protein localises to the centrosome. Its function is as follows. In complex with CFAP263, acts as a regulator of ciliary beating that connects radial spoke 3 (RS3) to the inner dynein arm (IDA) and the nexin-dynein regulatory complex (N-DRC). The complex is positioned parallel to N-DRC and forms a connection between the arch at the base of RS3, the IDA tail and N-DRC. The chain is Cilia- and flagella-associated protein 184 (CFAP184) from Macaca fascicularis (Crab-eating macaque).